The sequence spans 674 residues: uncharacterized protein (674 aa).

Positions 1–24 (MKTLKALKIFIIVYISSVSLESFA) are cleaved as a signal peptide. 2 consecutive transmembrane segments (helical) span residues 226-246 (IIGA…ALNK) and 254-274 (ITLF…LEPL). A disordered region spans residues 363-384 (GNGPGGNNKPIPNFDPDSKKDR). 4 helical membrane-spanning segments follow: residues 409 to 429 (IIIL…LLYF), 436 to 456 (CMIT…MVLF), 469 to 489 (VCIS…LLIT), and 562 to 582 (VVSI…FYYF). The disordered stretch occupies residues 624-674 (SSVHAQGKSPVEDKPDIGSKRKDGVQQGEDSENSSGGELADLASGSGGGKL). Over residues 633–647 (PVEDKPDIGSKRKDG) the composition is skewed to basic and acidic residues.

It belongs to the TrbL/VirB6 family.

It localises to the cell membrane. This is an uncharacterized protein from Rickettsia typhi (strain ATCC VR-144 / Wilmington).